Here is a 442-residue protein sequence, read N- to C-terminus: tRNA-2-methylthio-N(6)-dimethylallyladenosine synthase (442 aa).

Positions 5–122 (KKVFIKTLGC…LPEMIKRKQS (118 aa)) constitute an MTTase N-terminal domain. Residues C14, C51, C85, C159, C163, and C166 each contribute to the [4Fe-4S] cluster site. The Radical SAM core domain occupies 145–378 (KAEGAKAYVS…DLLNSNAQII (234 aa)). Residues 380–442 (RQMVGTEQRI…LPNSLRGELI (63 aa)) enclose the TRAM domain.

It belongs to the methylthiotransferase family. MiaB subfamily. As to quaternary structure, monomer. [4Fe-4S] cluster serves as cofactor.

It is found in the cytoplasm. The catalysed reaction is N(6)-dimethylallyladenosine(37) in tRNA + (sulfur carrier)-SH + AH2 + 2 S-adenosyl-L-methionine = 2-methylsulfanyl-N(6)-dimethylallyladenosine(37) in tRNA + (sulfur carrier)-H + 5'-deoxyadenosine + L-methionine + A + S-adenosyl-L-homocysteine + 2 H(+). In terms of biological role, catalyzes the methylthiolation of N6-(dimethylallyl)adenosine (i(6)A), leading to the formation of 2-methylthio-N6-(dimethylallyl)adenosine (ms(2)i(6)A) at position 37 in tRNAs that read codons beginning with uridine. The polypeptide is tRNA-2-methylthio-N(6)-dimethylallyladenosine synthase (Francisella philomiragia subsp. philomiragia (strain ATCC 25017 / CCUG 19701 / FSC 153 / O#319-036)).